Here is a 272-residue protein sequence, read N- to C-terminus: Type II secretion system protein C (272 aa).

At 1-16 (MNISKLPPLSPSVIRR) the chain is on the cytoplasmic side. A helical transmembrane segment spans residues 17–35 (ILFYLLMLLFCQQLAMIFW). The Periplasmic portion of the chain corresponds to 36–272 (RVGLPDNSPV…DIYMEFGGDE (237 aa)).

It belongs to the GSP C family.

The protein resides in the cell inner membrane. Involved in a type II secretion system (T2SS, formerly general secretion pathway, GSP) for the export of proteins. Required for the translocation of the multiple pectic enzymes. This Dickeya chrysanthemi (Pectobacterium chrysanthemi) protein is Type II secretion system protein C (outC).